Consider the following 412-residue polypeptide: Acetylornithine aminotransferase (412 aa).

Pyridoxal 5'-phosphate is bound by residues 109–110 (GA) and F142. A N(2)-acetyl-L-ornithine-binding site is contributed by R145. 233 to 236 (DEVQ) is a binding site for pyridoxal 5'-phosphate. K262 carries the N6-(pyridoxal phosphate)lysine modification. N(2)-acetyl-L-ornithine is bound at residue S289. A pyridoxal 5'-phosphate-binding site is contributed by T290.

The protein belongs to the class-III pyridoxal-phosphate-dependent aminotransferase family. ArgD subfamily. Homodimer. The cofactor is pyridoxal 5'-phosphate.

It localises to the cytoplasm. It carries out the reaction N(2)-acetyl-L-ornithine + 2-oxoglutarate = N-acetyl-L-glutamate 5-semialdehyde + L-glutamate. It functions in the pathway amino-acid biosynthesis; L-arginine biosynthesis; N(2)-acetyl-L-ornithine from L-glutamate: step 4/4. This is Acetylornithine aminotransferase from Thermosynechococcus vestitus (strain NIES-2133 / IAM M-273 / BP-1).